Here is a 128-residue protein sequence, read N- to C-terminus: L-ectoine synthase (128 aa).

Belongs to the ectoine synthase family.

It carries out the reaction (2S)-4-acetamido-2-aminobutanoate = L-ectoine + H2O. It functions in the pathway amine and polyamine biosynthesis; ectoine biosynthesis; L-ectoine from L-aspartate 4-semialdehyde: step 3/3. In terms of biological role, catalyzes the circularization of gamma-N-acetyl-alpha,gamma-diaminobutyric acid (ADABA) to ectoine (1,4,5,6-tetrahydro-2-methyl-4-pyrimidine carboxylic acid), which is an excellent osmoprotectant. The chain is L-ectoine synthase from Vibrio campbellii (strain ATCC BAA-1116).